Here is a 181-residue protein sequence, read N- to C-terminus: Adenine phosphoribosyltransferase (181 aa).

It belongs to the purine/pyrimidine phosphoribosyltransferase family. Homodimer.

Its subcellular location is the cytoplasm. It catalyses the reaction AMP + diphosphate = 5-phospho-alpha-D-ribose 1-diphosphate + adenine. The protein operates within purine metabolism; AMP biosynthesis via salvage pathway; AMP from adenine: step 1/1. Its function is as follows. Catalyzes a salvage reaction resulting in the formation of AMP, that is energically less costly than de novo synthesis. The sequence is that of Adenine phosphoribosyltransferase from Rhodopseudomonas palustris (strain ATCC BAA-98 / CGA009).